A 287-amino-acid chain; its full sequence is Undecaprenyl-diphosphatase (287 aa).

7 consecutive transmembrane segments (helical) span residues 50–70, 97–117, 131–151, 160–180, 206–226, 234–254, and 264–284; these read PGVS…IAYF, LGFA…GIKF, IPSI…AEQV, VVLG…LLPG, FLLG…DALA, LPLL…IDWL, and WLFV…WGVY.

The protein belongs to the UppP family.

The protein resides in the cell inner membrane. It catalyses the reaction di-trans,octa-cis-undecaprenyl diphosphate + H2O = di-trans,octa-cis-undecaprenyl phosphate + phosphate + H(+). Its function is as follows. Catalyzes the dephosphorylation of undecaprenyl diphosphate (UPP). Confers resistance to bacitracin. The chain is Undecaprenyl-diphosphatase from Synechococcus sp. (strain CC9605).